The sequence spans 28 residues: Mu-theraphotoxin-Hsp1a (28 aa).

3 disulfide bridges follow: cysteine 2-cysteine 16, cysteine 9-cysteine 21, and cysteine 15-cysteine 25. Asparagine 28 is subject to Asparagine amide.

This sequence belongs to the neurotoxin 30 (phrixotoxin) family. Expressed by the venom gland.

It localises to the secreted. Potent and selective inhibitor of Nav1.7/SCN9A sodium channels. Inhibits Nav1.7/SCN9A peak current (IC(50)=13 nM). In vivo, does not induce visible signs of toxicity when intravenously injected into mice. The chain is Mu-theraphotoxin-Hsp1a from Homoeomma sp. (Peruvian tarantula).